Reading from the N-terminus, the 147-residue chain is Hemoglobin subunit gamma (147 aa).

In terms of domain architecture, Globin spans 3 to 147; that stretch reads YFTAEEKAAI…VASALARKYH (145 aa). Positions 64 and 93 each coordinate heme b.

It belongs to the globin family. In terms of assembly, heterotetramer of two alpha chains and two gamma chains in fetal hemoglobin (Hb F). As to expression, red blood cells.

In terms of biological role, gamma chains make up the fetal hemoglobin F, in combination with alpha chains. In Dugong dugon (Dugong), this protein is Hemoglobin subunit gamma (HBG).